Here is a 431-residue protein sequence, read N- to C-terminus: Glutamate-1-semialdehyde 2,1-aminomutase (431 aa).

Lys269 is modified (N6-(pyridoxal phosphate)lysine).

This sequence belongs to the class-III pyridoxal-phosphate-dependent aminotransferase family. HemL subfamily. As to quaternary structure, homodimer. Requires pyridoxal 5'-phosphate as cofactor.

The protein localises to the cytoplasm. The enzyme catalyses (S)-4-amino-5-oxopentanoate = 5-aminolevulinate. The protein operates within porphyrin-containing compound metabolism; protoporphyrin-IX biosynthesis; 5-aminolevulinate from L-glutamyl-tRNA(Glu): step 2/2. Its pathway is porphyrin-containing compound metabolism; chlorophyll biosynthesis. The protein is Glutamate-1-semialdehyde 2,1-aminomutase of Prosthecochloris aestuarii (strain DSM 271 / SK 413).